The chain runs to 148 residues: Ribosomal RNA large subunit methyltransferase H 2 (148 aa).

Residues Leu74, Gly106, and 125–130 contribute to the S-adenosyl-L-methionine site; that span reads FSKMTF.

It belongs to the RNA methyltransferase RlmH family. In terms of assembly, homodimer.

It localises to the cytoplasm. It carries out the reaction pseudouridine(1915) in 23S rRNA + S-adenosyl-L-methionine = N(3)-methylpseudouridine(1915) in 23S rRNA + S-adenosyl-L-homocysteine + H(+). Its function is as follows. Specifically methylates the pseudouridine at position 1915 (m3Psi1915) in 23S rRNA. The polypeptide is Ribosomal RNA large subunit methyltransferase H 2 (Caldanaerobacter subterraneus subsp. tengcongensis (strain DSM 15242 / JCM 11007 / NBRC 100824 / MB4) (Thermoanaerobacter tengcongensis)).